A 378-amino-acid chain; its full sequence is Ribosomal RNA large subunit methyltransferase G (378 aa).

It belongs to the methyltransferase superfamily. RlmG family.

The protein localises to the cytoplasm. The enzyme catalyses guanosine(1835) in 23S rRNA + S-adenosyl-L-methionine = N(2)-methylguanosine(1835) in 23S rRNA + S-adenosyl-L-homocysteine + H(+). Its function is as follows. Specifically methylates the guanine in position 1835 (m2G1835) of 23S rRNA. This Shigella boydii serotype 4 (strain Sb227) protein is Ribosomal RNA large subunit methyltransferase G.